The sequence spans 37 residues: Large ribosomal subunit protein bL36 (37 aa).

Belongs to the bacterial ribosomal protein bL36 family.

The polypeptide is Large ribosomal subunit protein bL36 (Bordetella bronchiseptica (strain ATCC BAA-588 / NCTC 13252 / RB50) (Alcaligenes bronchisepticus)).